Reading from the N-terminus, the 465-residue chain is Argininosuccinate lyase (465 aa).

Belongs to the lyase 1 family. Argininosuccinate lyase subfamily.

Its subcellular location is the cytoplasm. It carries out the reaction 2-(N(omega)-L-arginino)succinate = fumarate + L-arginine. It participates in amino-acid biosynthesis; L-arginine biosynthesis; L-arginine from L-ornithine and carbamoyl phosphate: step 3/3. The chain is Argininosuccinate lyase from Clostridium botulinum (strain Alaska E43 / Type E3).